A 367-amino-acid chain; its full sequence is Deoxyhypusine synthase-like protein (367 aa).

The segment at 1–23 is disordered; the sequence is MKSLFQRRASKVRETEAMNAPVP.

This sequence belongs to the deoxyhypusine synthase family.

The polypeptide is Deoxyhypusine synthase-like protein (Caulobacter vibrioides (strain ATCC 19089 / CIP 103742 / CB 15) (Caulobacter crescentus)).